The primary structure comprises 923 residues: Neuropilin-1 (923 aa).

Residues 1–21 form the signal peptide; that stretch reads MERGLPLLCATLALALALAGA. The Extracellular portion of the chain corresponds to 22 to 856; that stretch reads FRSDKCGGTI…PGNVLKTLDP (835 aa). 3 disulfide bridges follow: Cys27/Cys54, Cys82/Cys104, and Cys147/Cys173. 2 CUB domains span residues 27 to 141 and 147 to 265; these read CGGT…YEIF and CSQN…YSVL. Residue Asn150 is glycosylated (N-linked (GlcNAc...) asparagine). 3 residues coordinate Ca(2+): Glu195, Asp209, and Asp250. Cys206 and Cys228 are disulfide-bonded. N-linked (GlcNAc...) asparagine glycosylation is found at Asn261, Asn300, and Asn522. Intrachain disulfides connect Cys275-Cys424 and Cys431-Cys583. F5/8 type C domains follow at residues 275 to 424 and 431 to 583; these read CMEA…VYGC and CSGM…LLGC. O-linked (Xyl...) (chondroitin sulfate) serine; alternate glycosylation is present at Ser612. O-linked (Xyl...) (heparan sulfate) serine; alternate glycosylation is present at Ser612. Residues 645 to 811 enclose the MAM domain; it reads TYGFNCEFGW…NHISQEDCAK (167 aa). The interval 820–845 is disordered; sequence TEIKIDETGSTPGYEGEGEGDKNISR. Ser829 is a glycosylation site (O-linked (Xyl...) (chondroitin sulfate) serine). N-linked (GlcNAc...) asparagine glycosylation occurs at Asn842. Residues 857 to 879 form a helical membrane-spanning segment; it reads ILITIIAMSALGVLLGAVCGVVL. Residues 880 to 923 lie on the Cytoplasmic side of the membrane; the sequence is YCACWHNGMSERNLSALENYNFELVDGVKLKKDKLNPQSNYSEA. The residue at position 894 (Ser894) is a Phosphoserine.

The protein belongs to the neuropilin family. In terms of assembly, homodimer, and heterodimer with NRP2. Binds PLXNB1. Interacts with FER. Interacts with VEGFA. Interacts with ABCB8/MITOSUR in mitochondria. In terms of tissue distribution, nervous system.

It is found in the mitochondrion membrane. The protein localises to the cell membrane. Its subcellular location is the cytoplasm. Its function is as follows. Receptor involved in the development of the cardiovascular system, in angiogenesis, in the formation of certain neuronal circuits and in organogenesis outside the nervous system. Mediates the chemorepulsant activity of semaphorins. Recognizes a C-end rule (CendR) motif R/KXXR/K on its ligands which causes cellular internalization and vascular leakage. Binds to semaphorin 3A (SEMA3A), the PLGF-2 isoform of PGF, the VEGF165 isoform of VEGFA and VEGFB. Coexpression with KDR results in increased VEGF165 binding to KDR as well as increased chemotaxis. Regulates VEGF-induced angiogenesis. Binding to VEGFA initiates a signaling pathway needed for motor neuron axon guidance and cell body migration, including for the caudal migration of facial motor neurons from rhombomere 4 to rhombomere 6 during embryonic development. Regulates mitochondrial iron transport via interaction with ABCB8/MITOSUR. This is Neuropilin-1 from Mus musculus (Mouse).